We begin with the raw amino-acid sequence, 77 residues long: Acyl carrier protein (77 aa).

The region spanning 2-77 is the Carrier domain; the sequence is SSIDKRIKEI…DAIDYITDHT (76 aa). S37 bears the O-(pantetheine 4'-phosphoryl)serine mark.

The protein belongs to the acyl carrier protein (ACP) family. In terms of processing, 4'-phosphopantetheine is transferred from CoA to a specific serine of apo-ACP by AcpS. This modification is essential for activity because fatty acids are bound in thioester linkage to the sulfhydryl of the prosthetic group.

The protein resides in the cytoplasm. Its pathway is lipid metabolism; fatty acid biosynthesis. Functionally, carrier of the growing fatty acid chain in fatty acid biosynthesis. In Geotalea uraniireducens (strain Rf4) (Geobacter uraniireducens), this protein is Acyl carrier protein.